Here is a 522-residue protein sequence, read N- to C-terminus: Putative aminopeptidase W07G4.4 (522 aa).

Zn(2+) contacts are provided by K271 and D276. K283 is a catalytic residue. 3 residues coordinate Zn(2+): D294, D354, and E356. Residue R358 is part of the active site.

Belongs to the peptidase M17 family. It depends on Zn(2+) as a cofactor.

This is Putative aminopeptidase W07G4.4 (lap-2) from Caenorhabditis elegans.